A 729-amino-acid chain; its full sequence is Fatty acid oxidation complex subunit alpha (729 aa).

The interval 1–189 (MLYQSETLQL…KIGLVDAVVD (189 aa)) is enoyl-CoA hydratase/isomerase. D296 provides a ligand contact to substrate. The tract at residues 311-729 (AAPKLAAVLG…LLDVSTNQPA (419 aa)) is 3-hydroxyacyl-CoA dehydrogenase. Residues M324, D343, 400–402 (VVE), K407, and S429 contribute to the NAD(+) site. The For 3-hydroxyacyl-CoA dehydrogenase activity role is filled by H450. N453 is an NAD(+) binding site. Positions 500 and 660 each coordinate substrate.

In the N-terminal section; belongs to the enoyl-CoA hydratase/isomerase family. The protein in the C-terminal section; belongs to the 3-hydroxyacyl-CoA dehydrogenase family. In terms of assembly, heterotetramer of two alpha chains (FadB) and two beta chains (FadA).

The catalysed reaction is a (3S)-3-hydroxyacyl-CoA + NAD(+) = a 3-oxoacyl-CoA + NADH + H(+). The enzyme catalyses a (3S)-3-hydroxyacyl-CoA = a (2E)-enoyl-CoA + H2O. It catalyses the reaction a 4-saturated-(3S)-3-hydroxyacyl-CoA = a (3E)-enoyl-CoA + H2O. It carries out the reaction (3S)-3-hydroxybutanoyl-CoA = (3R)-3-hydroxybutanoyl-CoA. The catalysed reaction is a (3Z)-enoyl-CoA = a 4-saturated (2E)-enoyl-CoA. The enzyme catalyses a (3E)-enoyl-CoA = a 4-saturated (2E)-enoyl-CoA. It functions in the pathway lipid metabolism; fatty acid beta-oxidation. In terms of biological role, involved in the aerobic and anaerobic degradation of long-chain fatty acids via beta-oxidation cycle. Catalyzes the formation of 3-oxoacyl-CoA from enoyl-CoA via L-3-hydroxyacyl-CoA. It can also use D-3-hydroxyacyl-CoA and cis-3-enoyl-CoA as substrate. The chain is Fatty acid oxidation complex subunit alpha from Yersinia pseudotuberculosis serotype IB (strain PB1/+).